A 72-amino-acid chain; its full sequence is Metallothionein-like protein 1 (72 aa).

The protein belongs to the metallothionein superfamily. Type 15 family.

In terms of biological role, metallothioneins have a high content of cysteine residues that bind various heavy metals. In Erythranthe guttata (Yellow monkey flower), this protein is Metallothionein-like protein 1.